A 256-amino-acid chain; its full sequence is MLRIADKTFDSHLFTGTGKFASSQLMVESIRASGSQLVTLAMKRVDLRQHNDAILEPLIAAGVTLLPNTSGAKTAEEAIFAAHLAREALGTNWLKLEIHPDARWLLPDPIETLKAAETLVQQGFVVLPYCGADPVLCKRLEEVGCAAVMPLGAPIGSNQGLETRAMLEIIIQQATVPVVVDAGIGVPSHAAQALEMGADAVLVNTAIAIADDPVNMAKAFRLAVEAGLLARQSGPGSRSHFAHATSPLTGFLEASA.

K95 (schiff-base intermediate with DXP) is an active-site residue. 1-deoxy-D-xylulose 5-phosphate contacts are provided by residues G156, 182 to 183 (AG), and 204 to 205 (NT).

This sequence belongs to the ThiG family. In terms of assembly, homotetramer. Forms heterodimers with either ThiH or ThiS.

The protein localises to the cytoplasm. The catalysed reaction is [ThiS sulfur-carrier protein]-C-terminal-Gly-aminoethanethioate + 2-iminoacetate + 1-deoxy-D-xylulose 5-phosphate = [ThiS sulfur-carrier protein]-C-terminal Gly-Gly + 2-[(2R,5Z)-2-carboxy-4-methylthiazol-5(2H)-ylidene]ethyl phosphate + 2 H2O + H(+). It participates in cofactor biosynthesis; thiamine diphosphate biosynthesis. Catalyzes the rearrangement of 1-deoxy-D-xylulose 5-phosphate (DXP) to produce the thiazole phosphate moiety of thiamine. Sulfur is provided by the thiocarboxylate moiety of the carrier protein ThiS. In vitro, sulfur can be provided by H(2)S. The protein is Thiazole synthase of Escherichia coli O17:K52:H18 (strain UMN026 / ExPEC).